We begin with the raw amino-acid sequence, 426 residues long: Glucose-1-phosphate adenylyltransferase (426 aa).

Residues Tyr100, Gly165, 180–181 (EK), and Ser191 contribute to the alpha-D-glucose 1-phosphate site.

The protein belongs to the bacterial/plant glucose-1-phosphate adenylyltransferase family. Homotetramer.

It catalyses the reaction alpha-D-glucose 1-phosphate + ATP + H(+) = ADP-alpha-D-glucose + diphosphate. The protein operates within glycan biosynthesis; glycogen biosynthesis. Its function is as follows. Involved in the biosynthesis of ADP-glucose, a building block required for the elongation reactions to produce glycogen. Catalyzes the reaction between ATP and alpha-D-glucose 1-phosphate (G1P) to produce pyrophosphate and ADP-Glc. This chain is Glucose-1-phosphate adenylyltransferase, found in Acetivibrio thermocellus (strain ATCC 27405 / DSM 1237 / JCM 9322 / NBRC 103400 / NCIMB 10682 / NRRL B-4536 / VPI 7372) (Clostridium thermocellum).